A 473-amino-acid chain; its full sequence is UDP-N-acetylmuramate--L-alanine ligase (473 aa).

123–129 (GSHGKTS) contacts ATP.

The protein belongs to the MurCDEF family.

Its subcellular location is the cytoplasm. It carries out the reaction UDP-N-acetyl-alpha-D-muramate + L-alanine + ATP = UDP-N-acetyl-alpha-D-muramoyl-L-alanine + ADP + phosphate + H(+). It functions in the pathway cell wall biogenesis; peptidoglycan biosynthesis. Cell wall formation. This is UDP-N-acetylmuramate--L-alanine ligase from Prochlorococcus marinus subsp. pastoris (strain CCMP1986 / NIES-2087 / MED4).